A 138-amino-acid polypeptide reads, in one-letter code: Large ribosomal subunit protein uL16 (138 aa).

Residues 1 to 13 (MLQPKRRKYRKEQ) are compositionally biased toward basic residues. The segment at 1–20 (MLQPKRRKYRKEQKGRNTGI) is disordered.

This sequence belongs to the universal ribosomal protein uL16 family. As to quaternary structure, part of the 50S ribosomal subunit.

Functionally, binds 23S rRNA and is also seen to make contacts with the A and possibly P site tRNAs. The polypeptide is Large ribosomal subunit protein uL16 (Paraburkholderia phytofirmans (strain DSM 17436 / LMG 22146 / PsJN) (Burkholderia phytofirmans)).